The following is a 347-amino-acid chain: Protein RecA (347 aa).

65-72 provides a ligand contact to ATP; the sequence is GPESSGKT.

This sequence belongs to the RecA family.

Its subcellular location is the cytoplasm. Functionally, can catalyze the hydrolysis of ATP in the presence of single-stranded DNA, the ATP-dependent uptake of single-stranded DNA by duplex DNA, and the ATP-dependent hybridization of homologous single-stranded DNAs. It interacts with LexA causing its activation and leading to its autocatalytic cleavage. This chain is Protein RecA, found in Stutzerimonas stutzeri (Pseudomonas stutzeri).